The chain runs to 201 residues: Ras-related protein Rab-9A (201 aa).

N-acetylalanine is present on A2. Position 17 (G17) interacts with GDP. GTP is bound by residues G17, V18, G19, K20, S21, S22, T34, H38, and T39. GDP-binding residues include G19, K20, S21, and S22. S21 contacts Mg(2+). The Switch 1 signature appears at 31–42; that stretch reads KFDTQLFHTIGV. T39 and D62 together coordinate Mg(2+). A Switch 2 motif is present at residues 64 to 78; the sequence is AGQERFRSLRTPFYR. Residues G65, N124, K125, and D127 each contribute to the GTP site. N124, K125, D127, A155, and K156 together coordinate GDP. A GTP-binding site is contributed by K156. S179 bears the Phosphoserine mark. T187 bears the Phosphothreonine mark. Residues C200 and C201 are each lipidated (S-geranylgeranyl cysteine).

This sequence belongs to the small GTPase superfamily. Rab family. As to quaternary structure, interacts (preferentially in its GTP-bound form) with GCC2 (via its GRIP domain). Interacts (GTP-bound form) with SGSM1; the GDP-bound form has much lower affinity for SGSM1. Interacts with SGSM2. The GTP-bound form but not the GDP-bound form interacts with HPS4 and the BLOC-3 complex (heterodimer of HPS1 and HPS4) but does not interact with HPS1 alone. Interacts (GTP-bound form) with NDE1; two RAB9A-GTP molecules lie on the opposite sides of the NDE1 homodimer; the interaction leads to RAB9A-dynein motor tethering. Interacts (GTP-bound form) with NDEL1. Mg(2+) serves as cofactor.

The protein localises to the cell membrane. It localises to the endoplasmic reticulum membrane. The protein resides in the golgi apparatus membrane. Its subcellular location is the late endosome. It is found in the cytoplasmic vesicle. The protein localises to the phagosome membrane. It localises to the phagosome. The protein resides in the cytoplasmic vesicle membrane. Its subcellular location is the melanosome. The catalysed reaction is GTP + H2O = GDP + phosphate + H(+). Its activity is regulated as follows. Regulated by guanine nucleotide exchange factors (GEFs) which promote the exchange of bound GDP for free GTP. Regulated by GTPase activating proteins (GAPs) which increase the GTP hydrolysis activity. Inhibited by GDP dissociation inhibitors (GDIs). In terms of biological role, the small GTPases Rab are key regulators of intracellular membrane trafficking, from the formation of transport vesicles to their fusion with membranes. Rabs cycle between an inactive GDP-bound form and an active GTP-bound form that is able to recruit to membranes different sets of downstream effectors directly responsible for vesicle formation, movement, tethering and fusion. RAB9A is involved in the transport of proteins between the endosomes and the trans-Golgi network (TGN). Specifically uses NDE1/NDEL1 as an effector to interact with the dynein motor complex in order to control retrograde trafficking of RAB9-associated late endosomes to the TGN. Involved in the recruitment of SGSM2 to melanosomes and is required for the proper trafficking of melanogenic enzymes TYR, TYRP1 and DCT/TYRP2 to melanosomes in melanocytes. This Canis lupus familiaris (Dog) protein is Ras-related protein Rab-9A (RAB9A).